The following is a 207-amino-acid chain: ATP-dependent Clp protease proteolytic subunit (207 aa).

Catalysis depends on S111, which acts as the Nucleophile. H136 is a catalytic residue.

This sequence belongs to the peptidase S14 family. Fourteen ClpP subunits assemble into 2 heptameric rings which stack back to back to give a disk-like structure with a central cavity, resembling the structure of eukaryotic proteasomes.

The protein resides in the cytoplasm. The enzyme catalyses Hydrolysis of proteins to small peptides in the presence of ATP and magnesium. alpha-casein is the usual test substrate. In the absence of ATP, only oligopeptides shorter than five residues are hydrolyzed (such as succinyl-Leu-Tyr-|-NHMec, and Leu-Tyr-Leu-|-Tyr-Trp, in which cleavage of the -Tyr-|-Leu- and -Tyr-|-Trp bonds also occurs).. Cleaves peptides in various proteins in a process that requires ATP hydrolysis. Has a chymotrypsin-like activity. Plays a major role in the degradation of misfolded proteins. This chain is ATP-dependent Clp protease proteolytic subunit, found in Proteus mirabilis (strain HI4320).